A 428-amino-acid chain; its full sequence is Enolase (428 aa).

Gln162 is a (2R)-2-phosphoglycerate binding site. The active-site Proton donor is the Glu204. 3 residues coordinate Mg(2+): Asp241, Glu283, and Asp310. The (2R)-2-phosphoglycerate site is built by Lys335, Arg364, Ser365, and Lys386. Lys335 serves as the catalytic Proton acceptor.

Belongs to the enolase family. Requires Mg(2+) as cofactor.

The protein localises to the cytoplasm. It is found in the secreted. The protein resides in the cell surface. The enzyme catalyses (2R)-2-phosphoglycerate = phosphoenolpyruvate + H2O. The protein operates within carbohydrate degradation; glycolysis; pyruvate from D-glyceraldehyde 3-phosphate: step 4/5. Catalyzes the reversible conversion of 2-phosphoglycerate (2-PG) into phosphoenolpyruvate (PEP). It is essential for the degradation of carbohydrates via glycolysis. This chain is Enolase, found in Rhodococcus jostii (strain RHA1).